The following is a 144-amino-acid chain: Large ribosomal subunit protein uL16c (144 aa).

It belongs to the universal ribosomal protein uL16 family. In terms of assembly, part of the 50S ribosomal subunit.

The protein localises to the plastid. It localises to the chloroplast. The chain is Large ribosomal subunit protein uL16c from Chara vulgaris (Common stonewort).